The primary structure comprises 104 residues: L-rhamnose mutarotase (104 aa).

Tyr-18 lines the substrate pocket. The Proton donor role is filled by His-22. Substrate is bound by residues Tyr-41 and 76-77 (WW).

This sequence belongs to the rhamnose mutarotase family. In terms of assembly, homodimer.

The protein resides in the cytoplasm. It catalyses the reaction alpha-L-rhamnose = beta-L-rhamnose. It functions in the pathway carbohydrate metabolism; L-rhamnose metabolism. Its function is as follows. Involved in the anomeric conversion of L-rhamnose. The chain is L-rhamnose mutarotase from Cronobacter sakazakii (strain ATCC BAA-894) (Enterobacter sakazakii).